A 1070-amino-acid chain; its full sequence is uncharacterized protein (1070 aa).

5 disordered regions span residues 66-88 (EKEK…PGLE), 355-388 (DLDF…DFSN), 423-483 (EDDL…EQID), 667-692 (EELK…EETE), and 735-786 (SKTQ…NNNN). Low complexity predominate over residues 73-83 (NENTSNVNKIK). 2 stretches are compositionally biased toward basic and acidic residues: residues 435 to 460 (KKEE…EEYR) and 474 to 483 (MKMHEKEQID). Residues 475 to 736 (KMHEKEQIDD…EMRLQLIRSK (262 aa)) adopt a coiled-coil conformation. A compositionally biased stretch (polar residues) spans 735 to 745 (SKTQGTSSTFI). Residues 751 to 765 (KHLESLKEEKKKEVK) are compositionally biased toward basic and acidic residues. Low complexity predominate over residues 773–786 (NNNNNNNNNNNNNN).

This is an uncharacterized protein from Plasmodium falciparum (isolate 3D7).